We begin with the raw amino-acid sequence, 251 residues long: tRNA pseudouridine synthase A (251 aa).

D26 (nucleophile) is an active-site residue. Y98 is a substrate binding site.

Belongs to the tRNA pseudouridine synthase TruA family. In terms of assembly, homodimer.

It catalyses the reaction uridine(38/39/40) in tRNA = pseudouridine(38/39/40) in tRNA. Functionally, formation of pseudouridine at positions 38, 39 and 40 in the anticodon stem and loop of transfer RNAs. In Mycolicibacterium paratuberculosis (strain ATCC BAA-968 / K-10) (Mycobacterium paratuberculosis), this protein is tRNA pseudouridine synthase A.